The following is a 321-amino-acid chain: Homoserine kinase (321 aa).

It belongs to the pseudomonas-type ThrB family.

It catalyses the reaction L-homoserine + ATP = O-phospho-L-homoserine + ADP + H(+). It functions in the pathway amino-acid biosynthesis; L-threonine biosynthesis; L-threonine from L-aspartate: step 4/5. The protein is Homoserine kinase of Xanthobacter autotrophicus (strain ATCC BAA-1158 / Py2).